A 1104-amino-acid chain; its full sequence is SWI/SNF complex subunit SMARCC1 (1104 aa).

Residues 27-301 (LAVYRRKDGG…PVSFRQRIST (275 aa)) are marR-like, BRCT and chromo domains module. The MarR-like domain occupies 37–163 (PASKFWESPD…IEKTLVQNNC (127 aa)). Positions 167–210 (PNIYLIPDIDLKLANKLKDIIKRHQGTFTDEKSKASHHIYPYPS) constitute a BRCT; N-terminus domain. Lys178 is covalently cross-linked (Glycyl lysine isopeptide (Lys-Gly) (interchain with G-Cter in SUMO2)). One can recognise a Chromo domain in the interval 216–244 (EWLRPVMRRDKQVLVHWGFYPDSYDTWVH). One can recognise a BRCT; C-terminus domain in the interval 260–284 (KPWKVHVKWILDTDVFNEWMNEEDY). The interval 295-445 (FRQRISTKNE…PGEDNVTEQT (151 aa)) is disordered. Residues 301–317 (TKNEEPVRSPERRDRKA) are compositionally biased toward basic and acidic residues. Phosphoserine is present on residues Ser309, Ser327, and Ser329. A Phosphothreonine modification is found at Thr334. 2 positions are modified to N6-acetyllysine: Lys344 and Lys345. Phosphoserine is present on Ser349. An N6-acetyllysine modification is found at Lys353. Ser356 is modified (phosphoserine). Lys358 carries the N6-acetyllysine; alternate modification. A Glycyl lysine isopeptide (Lys-Gly) (interchain with G-Cter in SUMO2); alternate cross-link involves residue Lys358. Thr397 carries the post-translational modification Phosphothreonine. Residues 448–545 (IIIPSYASWF…YQVDPESRPM (98 aa)) enclose the SWIRM domain. Ser572 bears the Phosphoserine mark. Lys591 participates in a covalent cross-link: Glycyl lysine isopeptide (Lys-Gly) (interchain with G-Cter in SUMO2). The SANT domain maps to 617-668 (SAGREWTEQETLLLLEALEMYKDDWNKVSEHVGSRTQDECILHFLRLPIEDP). Lys738 is covalently cross-linked (Glycyl lysine isopeptide (Lys-Gly) (interchain with G-Cter in SUMO2)). The disordered stretch occupies residues 744-859 (ARASGKVDPT…DAGKKKVEHE (116 aa)). Position 775 is a phosphoserine (Ser775). Residues 775–784 (SEEEKMETDP) are compositionally biased toward acidic residues. Basic and acidic residues predominate over residues 788–859 (QPEKAENKVE…DAGKKKVEHE (72 aa)). Lys795 is covalently cross-linked (Glycyl lysine isopeptide (Lys-Gly) (interchain with G-Cter in SUMO2)). Ser821 and Ser824 each carry phosphoserine. Residues Lys828 and Lys855 each participate in a glycyl lysine isopeptide (Lys-Gly) (interchain with G-Cter in SUMO2) cross-link. Residues 909-945 (KLRHFEELETIMDREKEALEQQRQQLLTERQNFHMEQ) are a coiled coil. Position 947 is an N6-acetyllysine (Lys947). Disordered regions lie at residues 955–1021 (QQME…PGPG) and 1041–1104 (IHPT…SATP). Residues 956 to 973 (QMEQQQQHGQTPQQAHQH) are compositionally biased toward low complexity. Pro residues-rich tracts occupy residues 994-1017 (QQPP…PGQI) and 1048-1057 (PTPPGMPPMP). Arg1064 is subject to Asymmetric dimethylarginine. Pro residues predominate over residues 1073-1104 (MYPPPPQQQQPPPPADGVPPPPAPGPPASATP).

The protein belongs to the SMARCC family. As to quaternary structure, component of the multiprotein chromatin-remodeling complexes SWI/SNF: SWI/SNF-A (BAF), SWI/SNF-B (PBAF) and related complexes. The canonical complex contains a catalytic subunit (either SMARCA4/BRG1/BAF190A or SMARCA2/BRM/BAF190B) and at least SMARCE1, ACTL6A/BAF53, SMARCC1/BAF155, SMARCC2/BAF170, and SMARCB1/SNF5/BAF47. Other subunits specific to each of the complexes may also be present permitting several possible combinations developmentally and tissue specific. Component of the BAF complex, which includes at least actin (ACTB), ARID1A/BAF250A, ARID1B/BAF250B, SMARCA2/BRM, SMARCA4/BRG1, ACTL6A/BAF53, ACTL6B/BAF53B, SMARCE1/BAF57, SMARCC1/BAF155, SMARCC2/BAF170, SMARCB1/SNF5/INI1, and one or more SMARCD1/BAF60A, SMARCD2/BAF60B, or SMARCD3/BAF60C. In muscle cells, the BAF complex also contains DPF3. Component of neural progenitors-specific chromatin remodeling complex (npBAF complex) composed of at least, ARID1A/BAF250A or ARID1B/BAF250B, SMARCD1/BAF60A, SMARCD3/BAF60C, SMARCA2/BRM/BAF190B, SMARCA4/BRG1/BAF190A, SMARCB1/BAF47, SMARCC1/BAF155, SMARCE1/BAF57, SMARCC2/BAF170, PHF10/BAF45A, ACTL6A/BAF53A and actin. Component of neuron-specific chromatin remodeling complex (nBAF complex) composed of at least, ARID1A/BAF250A or ARID1B/BAF250B, SMARCD1/BAF60A, SMARCD3/BAF60C, SMARCA2/BRM/BAF190B, SMARCA4/BRG1/BAF190A, SMARCB1/BAF47, SMARCC1/BAF155, SMARCE1/BAF57, SMARCC2/BAF170, DPF1/BAF45B, DPF3/BAF45C, ACTL6B/BAF53B and actin. Component of the SWI/SNF-B (PBAF) chromatin remodeling complex, at least composed of SMARCA4/BRG1, SMARCB1/BAF47/SNF5, ACTL6A/BAF53A or ACTL6B/BAF53B, SMARCE1/BAF57, SMARCD1/BAF60A, SMARCD2/BAF60B, perhaps SMARCD3/BAF60C, SMARCC1/BAF155, SMARCC2/BAF170, PBRM1/BAF180, ARID2/BAF200 and actin. Component of SWI/SNF (GBAF) subcomplex, which includes at least BICRA or BICRAL (mutually exclusive), BRD9, SS18, SMARCA2/BRM, SMARCA4/BRG1/BAF190A, ACTL6A/BAF53, SMARCC1/BAF155, and SMARCD1/BAF60A. May also interact with the SIN3A histone deacetylase transcription repressor complex in conjunction with SMARCA2 and SMARCA4. The minimal complex composed of SMARCC1 and SMARCA4 seems to be able to associate with cyclin such as CCNE1 or transcription factors such as KLF1 or GATA1. Interacts with NR3C1 and SMARD1. Interacts with TRIP12; leading to disrupt interaction between TRIP12 and SMARCE1 and prevent SMARCE1 ubiquitination. Interacts with CEBPB (when not methylated). Interacts with KDM6B. Interacts with MKKS; the interaction takes place predominantly in the cytoplasm and may modulate SMARCC1 location. Interacts with DPF2. Interacts with PRDM1/BLIMP1. Interacts with DPF3a (isoform 2 of DPF3/BAF45C) and with HDGFL2 in a DPF3a-dependent manner. In terms of tissue distribution, highly expressed in adult brain, testis and thymus.

It is found in the nucleus. Its subcellular location is the cytoplasm. In terms of biological role, involved in transcriptional activation and repression of select genes by chromatin remodeling (alteration of DNA-nucleosome topology). Component of SWI/SNF chromatin remodeling complexes that carry out key enzymatic activities, changing chromatin structure by altering DNA-histone contacts within a nucleosome in an ATP-dependent manner. May stimulate the ATPase activity of the catalytic subunit of the complex. Belongs to the neural progenitors-specific chromatin remodeling complex (npBAF complex) and the neuron-specific chromatin remodeling complex (nBAF complex). During neural development a switch from a stem/progenitor to a postmitotic chromatin remodeling mechanism occurs as neurons exit the cell cycle and become committed to their adult state. The transition from proliferating neural stem/progenitor cells to postmitotic neurons requires a switch in subunit composition of the npBAF and nBAF complexes. As neural progenitors exit mitosis and differentiate into neurons, npBAF complexes which contain ACTL6A/BAF53A and PHF10/BAF45A, are exchanged for homologous alternative ACTL6B/BAF53B and DPF1/BAF45B or DPF3/BAF45C subunits in neuron-specific complexes (nBAF). The npBAF complex is essential for the self-renewal/proliferative capacity of the multipotent neural stem cells. The nBAF complex along with CREST plays a role regulating the activity of genes essential for dendrite growth. The chain is SWI/SNF complex subunit SMARCC1 (Smarcc1) from Mus musculus (Mouse).